A 528-amino-acid chain; its full sequence is Vacuolar fusion protein MON1 homolog (528 aa).

Polar residues predominate over residues 1-16; sequence MEVEQTSVRSDTNSTC. The tract at residues 1 to 50 is disordered; it reads MEVEQTSVRSDTNSTCEYLDAEGDPESPNLYQEADPDQEAEQQNHSIISE.

The protein belongs to the MON1/SAND family. Component of the Mon1-Ccz1 guanyl-nucleotide exchange factor complex made up of Mon1, Ccz1 and Bulli; the interaction of Bulli with the Mon1-Ccz1 heterodimer is mediated via the C-terminal Mic1 domain of Bulli. Mon1 and Ccz1 form a stable complex which displays Rab7 GEF activity with or without Bulli; GEF activity is enhanced by Bulli possibly by improving membrane association of the complex. Interacts with Rab5 and Rab7; preferentially binds GTP-bound Rab5 and GDP-bound Rab7.

The protein localises to the cytoplasm. It localises to the cytosol. With respect to regulation, the Rab7 guanyl-nucleotide exchange factor (GEF) activity of the Mon1-Ccz1 complex is autoinhibited by the N-terminal disordered region of Mon1. GEF activity is stimulated by Rab5-mediated recruitment to membranes. Functionally, part of the Mon1-Ccz1 guanyl-nucleotide exchange factor complex specific for Rab7 that promotes the exchange of GDP to GTP, converting Rab7 from an inactive GDP-bound form into an active GTP-bound form. Plays an important role in membrane trafficking through the secretory apparatus. Required for recruitment of Rab7 to endosomal and autophagosomal membranes to mediate endolysosomal and autolysosomal vesicle maturation. Required for fusion of multivesicular bodies and lysosomes but not their formation or trafficking. Involved in the replacement of Rab5 (and possibly Rab4) with Rab7, also known as Rab conversion or the Rab cascade, during endosomal maturation. The Mon1-Ccz1 complex is recruited to phosphatidylinositol 3-phosphate (PtdIns[3]P) enriched membranes by Rab5, which stimulates recruitment and guanyl-nucleotide exchange of Rab7. Together with Rab7 required for autolysosome formation in fat cells and autophagic degradation during starvation-induced basal and developmental autophagy. Involved in neuromuscular junction (NMJ) presynaptic bouton function and morphogenesis. Together with Rab7, regulates levels of postsynaptic glutamate receptor GluRIIA in the NMJ presynapse. This Drosophila melanogaster (Fruit fly) protein is Vacuolar fusion protein MON1 homolog.